The following is a 300-amino-acid chain: Probable low-salt glycan biosynthesis reductase Agl14 (300 aa).

NADH is bound by residues 10–12 (GLL), 46–47 (DI), and 70–72 (AYT). NADPH-binding positions include 11–12 (LL), 46–47 (DI), 70–72 (AYT), Tyr-109, Tyr-135, and Lys-139. NADH contacts are provided by Tyr-135 and Lys-139. Catalysis depends on Tyr-135, which acts as the Proton donor/acceptor.

It belongs to the dTDP-4-dehydrorhamnose reductase family.

It functions in the pathway protein modification; protein glycosylation. It participates in cell surface structure biogenesis; S-layer biogenesis. Its function is as follows. Reductase involved in N-glycan biosynthetic pathway that takes place under low-salt conditions (1.75 M instead of 3.4 M). Participates in the formation of the tetrasaccharide present at 'Asn-532' of S-layer glycoprotein Csg, consisting of a sulfated hexose, 2 hexoses and rhamnose. Involved in the addition of final rhamnose (sugar 4) of the tetrasaccharide on the dolichol phosphate carrier. In Haloferax volcanii (strain ATCC 29605 / DSM 3757 / JCM 8879 / NBRC 14742 / NCIMB 2012 / VKM B-1768 / DS2) (Halobacterium volcanii), this protein is Probable low-salt glycan biosynthesis reductase Agl14 (agl14).